The primary structure comprises 127 residues: Protein chibby homolog 1 (127 aa).

Residues 1 to 10 (MPLFGSTFSP) are compositionally biased toward polar residues. Positions 1-26 (MPLFGSTFSPKKTPPRKSASLSNLHN) are disordered. 2 positions are modified to phosphoserine: Ser9 and Ser20. Positions 60-112 (IAETGISGGVDRREAQRLRRRNQQLEEENNLLRLKVDILLDMLSETTAESHLM) are minimal region for the interaction with PKD2. A coiled-coil region spans residues 68 to 125 (GVDRREAQRLRRRNQQLEEENNLLRLKVDILLDMLSETTAESHLMEKELDELKSVSRR). Residues 77–98 (LRRRNQQLEEENNLLRLKVDIL) are leucine-zipper; mediates homodimerization.

The protein belongs to the chibby family. As to quaternary structure, homodimer. Homodimerization is essential for nuclear localization and interaction with KPNA4 but is dispensable for interaction with CTNNB1. Interacts with polycystin-2/PKD2 and GM130. Interacts with the C-terminal region of CTNNB1. Interacts (C-terminus) with TCIM (C-terminus), TCIM competes with CTNNB1 for the interaction with CBY1. Interacts with FAM92A; this interaction facilitates targeting of FAM92A to cilium basal body. Interacts with CIBAR2. Interacts with KPNA4.

It localises to the nucleus speckle. It is found in the cytoplasm. Its subcellular location is the cytoskeleton. The protein resides in the cilium basal body. The protein localises to the microtubule organizing center. It localises to the centrosome. It is found in the centriole. Its subcellular location is the golgi apparatus. The protein resides in the trans-Golgi network. The protein localises to the cell projection. It localises to the cilium. It is found in the flagellum. Its subcellular location is the nucleus. Its function is as follows. Inhibits the Wnt/Wingless pathway by binding to CTNNB1/beta-catenin and inhibiting beta-catenin-mediated transcriptional activation through competition with TCF/LEF transcription factors. Has also been shown to play a role in regulating the intracellular trafficking of polycystin-2/PKD2 and possibly of other intracellular proteins. Promotes adipocyte and cardiomyocyte differentiation. The chain is Protein chibby homolog 1 (CBY1) from Bos taurus (Bovine).